The chain runs to 496 residues: Glycylpeptide N-tetradecanoyltransferase 1 (496 aa).

The interval 1-82 (MADESETAVK…SAQDQPVKMN (82 aa)) is disordered. Phosphoserine is present on residues serine 31 and serine 47. A compositionally biased stretch (basic residues) spans 55 to 66 (KKKKKKQKKKKE). The residue at position 83 (serine 83) is a Phosphoserine. 11 residues coordinate tetradecanoyl-CoA: glutamine 118, phenylalanine 119, tryptophan 120, phenylalanine 247, leucine 248, cysteine 249, valine 250, serine 256, arginine 258, valine 259, and alanine 260.

It belongs to the NMT family. Heart, gut, kidney, liver and placenta.

The protein resides in the cytoplasm. Its subcellular location is the cytosol. It is found in the membrane. The enzyme catalyses N-terminal glycyl-[protein] + tetradecanoyl-CoA = N-tetradecanoylglycyl-[protein] + CoA + H(+). It catalyses the reaction N-terminal glycyl-L-lysyl-[protein] + tetradecanoyl-CoA = N-terminal glycyl-(N(6)-tetradecanoyl)-L-lysyl-[protein] + CoA + H(+). Its function is as follows. Adds a myristoyl group to the N-terminal glycine residue of certain cellular and viral proteins. Also able to mediate N-terminal lysine myristoylation of proteins: catalyzes myristoylation of ARF6 on both 'Gly-2' and 'Lys-3'. Lysine myristoylation is required to maintain ARF6 on membranes during the GTPase cycle. The chain is Glycylpeptide N-tetradecanoyltransferase 1 from Homo sapiens (Human).